Reading from the N-terminus, the 425-residue chain is Xylose isomerase (425 aa).

Active-site residues include histidine 101 and aspartate 104. Mg(2+) contacts are provided by glutamate 232, glutamate 268, histidine 271, aspartate 296, aspartate 307, aspartate 309, and aspartate 339.

The protein belongs to the xylose isomerase family. In terms of assembly, homotetramer. Requires Mg(2+) as cofactor.

It localises to the cytoplasm. It catalyses the reaction alpha-D-xylose = alpha-D-xylulofuranose. This Salmonella paratyphi A (strain ATCC 9150 / SARB42) protein is Xylose isomerase.